A 411-amino-acid polypeptide reads, in one-letter code: Putative BMP-2-inducible kinase-like protein (411 aa).

Disordered regions lie at residues 1 to 87, 215 to 280, and 392 to 411; these read MIAP…TQDI, SQQQ…RVSQ, and QQSQ…PSKQ. Basic and acidic residues-rich tracts occupy residues 8–18 and 53–68; these read SSEEEGQKDEE and EKRS…KAKY. The stretch at 47–71 forms a coiled coil; it reads EDEEEEEKRSSDSDYEQAKAKYSDM. Basic residues-rich tracts occupy residues 220–234 and 243–258; these read VKQR…RQRR and NGKR…KKTL.

The polypeptide is Putative BMP-2-inducible kinase-like protein (BMP2KL) (Homo sapiens (Human)).